A 173-amino-acid polypeptide reads, in one-letter code: MKQHINKPTFKVGIGYDVHKFDNIEYDATNTFITICGIKINHHKKIVAHSDGDVGLHALTDAILGAVGCGSIGQHFPNTDNKWKDAKSDYFLIEAKNKAQEKGYYISNADIIIICEQPKIMPHALKMQEYIANLIKIDTSCINVKATTTEKLGFLGRKEGIAAQAIVLCCLQN.

Residues Asp-17 and His-19 each contribute to the a divalent metal cation site. 4-CDP-2-C-methyl-D-erythritol 2-phosphate is bound by residues 17–19 (DVH) and 49–50 (HS). A divalent metal cation is bound at residue His-57. Residues 76-80 (FPNTD), 147-150 (TTTE), Phe-154, and Arg-157 contribute to the 4-CDP-2-C-methyl-D-erythritol 2-phosphate site.

The protein belongs to the IspF family. As to quaternary structure, homotrimer. A divalent metal cation is required as a cofactor.

It catalyses the reaction 4-CDP-2-C-methyl-D-erythritol 2-phosphate = 2-C-methyl-D-erythritol 2,4-cyclic diphosphate + CMP. The protein operates within isoprenoid biosynthesis; isopentenyl diphosphate biosynthesis via DXP pathway; isopentenyl diphosphate from 1-deoxy-D-xylulose 5-phosphate: step 4/6. Its function is as follows. Involved in the biosynthesis of isopentenyl diphosphate (IPP) and dimethylallyl diphosphate (DMAPP), two major building blocks of isoprenoid compounds. Catalyzes the conversion of 4-diphosphocytidyl-2-C-methyl-D-erythritol 2-phosphate (CDP-ME2P) to 2-C-methyl-D-erythritol 2,4-cyclodiphosphate (ME-CPP) with a corresponding release of cytidine 5-monophosphate (CMP). The sequence is that of 2-C-methyl-D-erythritol 2,4-cyclodiphosphate synthase from Ehrlichia canis (strain Jake).